We begin with the raw amino-acid sequence, 228 residues long: Vesicle transport protein SEC20 (228 aa).

The Cytoplasmic portion of the chain corresponds to M1 to L199. The stretch at L37–S90 forms a coiled coil. Residues T200–V220 traverse the membrane as a helical; Anchor for type IV membrane protein segment. Topologically, residues K221 to L228 are lumenal.

This sequence belongs to the SEC20 family. As to quaternary structure, component of a SNARE complex consisting of STX18, USE1L, BNIP1/SEC20L and SEC22B. Interacts directly with STX18, RINT1/TIP20L and NAPA. Interacts with ZW10 through RINT1. Interacts with BCL2. Interacts with RNF186. Interacts with RNF185. Interacts with SQSTM1; increased by 'Lys-63'-linked polyubiquitination of BNIP1. Post-translationally, polyubiquitinated. 'Lys-63'-linked polyubiquitination by RNF185 increases the interaction with the autophagy receptor SQSTM1. Undergoes 'Lys-29'- and 'Lys-63'-linked polyubiquitination by RNF186 that may regulate BNIP1 localization to the mitochondrion.

The protein resides in the endoplasmic reticulum membrane. The protein localises to the mitochondrion membrane. Its function is as follows. As part of a SNARE complex may be involved in endoplasmic reticulum membranes fusion and be required for the maintenance of endoplasmic reticulum organization. Also plays a role in apoptosis. It is for instance required for endoplasmic reticulum stress-induced apoptosis. As a substrate of RNF185 interacting with SQSTM1, might also be involved in mitochondrial autophagy. The sequence is that of Vesicle transport protein SEC20 from Mus musculus (Mouse).